Consider the following 582-residue polypeptide: 15-cis-phytoene desaturase, chloroplastic/chromoplastic (582 aa).

A chloroplast and chromoplast-targeting transit peptide spans 1-93 (MNLLGSISTG…ELENTINFLE (93 aa)). FAD-binding positions include A121, 140–141 (EA), K148, 165–166 (HI), and Y171. Position 306 (R306) interacts with substrate. Residue D537 coordinates FAD. Residue A545 coordinates substrate. M547 contributes to the FAD binding site.

This sequence belongs to the carotenoid/retinoid oxidoreductase family. As to quaternary structure, homotetramer. FAD is required as a cofactor. As to expression, expressed in flower buds and lips. Lower expression in leaves and roots.

It localises to the plastid. The protein resides in the chloroplast. Its subcellular location is the chromoplast. The protein localises to the membrane. The enzyme catalyses 2 a plastoquinone + 15-cis-phytoene = 9,9',15-tri-cis-zeta-carotene + 2 a plastoquinol. It functions in the pathway carotenoid biosynthesis; lycopene biosynthesis. Functionally, converts phytoene into zeta-carotene via the intermediary of phytofluene by the symmetrical introduction of two double bonds at the C-11 and C-11' positions of phytoene with a concomitant isomerization of two neighboring double bonds at the C9 and C9' positions from trans to cis. This is 15-cis-phytoene desaturase, chloroplastic/chromoplastic (PDS) from Oncidium hybrid cultivar (Orchid).